A 331-amino-acid chain; its full sequence is Probable tRNA pseudouridine synthase B (331 aa).

Basic and acidic residues predominate over residues Met-1–Pro-15. Residues Met-1–Arg-27 are disordered. Asp-71 serves as the catalytic Nucleophile. One can recognise a PUA domain in the interval Leu-238–Met-313.

This sequence belongs to the pseudouridine synthase TruB family. Type 2 subfamily.

The enzyme catalyses uridine(55) in tRNA = pseudouridine(55) in tRNA. In terms of biological role, could be responsible for synthesis of pseudouridine from uracil-55 in the psi GC loop of transfer RNAs. This chain is Probable tRNA pseudouridine synthase B, found in Pyrobaculum arsenaticum (strain DSM 13514 / JCM 11321 / PZ6).